The primary structure comprises 361 residues: Phospho-N-acetylmuramoyl-pentapeptide-transferase (361 aa).

A run of 10 helical transmembrane segments spans residues 28–48, 74–94, 99–119, 133–153, 168–188, 203–223, 236–256, 263–283, 288–308, and 338–358; these read LAII…IKFL, TMGG…LADL, TWIT…DDYA, SKLL…EYLD, LSLD…VGSS, VPIA…GNLI, TGEL…FLWF, VFMG…ISVI, IVLA…ILQV, and KVVI…LSSL.

This sequence belongs to the glycosyltransferase 4 family. MraY subfamily. Requires Mg(2+) as cofactor.

Its subcellular location is the cell inner membrane. The catalysed reaction is UDP-N-acetyl-alpha-D-muramoyl-L-alanyl-gamma-D-glutamyl-meso-2,6-diaminopimeloyl-D-alanyl-D-alanine + di-trans,octa-cis-undecaprenyl phosphate = di-trans,octa-cis-undecaprenyl diphospho-N-acetyl-alpha-D-muramoyl-L-alanyl-D-glutamyl-meso-2,6-diaminopimeloyl-D-alanyl-D-alanine + UMP. Its pathway is cell wall biogenesis; peptidoglycan biosynthesis. In terms of biological role, catalyzes the initial step of the lipid cycle reactions in the biosynthesis of the cell wall peptidoglycan: transfers peptidoglycan precursor phospho-MurNAc-pentapeptide from UDP-MurNAc-pentapeptide onto the lipid carrier undecaprenyl phosphate, yielding undecaprenyl-pyrophosphoryl-MurNAc-pentapeptide, known as lipid I. The polypeptide is Phospho-N-acetylmuramoyl-pentapeptide-transferase (Rickettsia massiliae (strain Mtu5)).